We begin with the raw amino-acid sequence, 56 residues long: Small ribosomal subunit protein uS14 (56 aa).

Zn(2+)-binding residues include Cys-21, Cys-24, Cys-39, and Cys-42.

Belongs to the universal ribosomal protein uS14 family. It depends on Zn(2+) as a cofactor.

In Griffithsia japonica (Red alga), this protein is Small ribosomal subunit protein uS14 (RPS29).